The chain runs to 301 residues: Methionyl-tRNA formyltransferase (301 aa).

110-113 is a (6S)-5,6,7,8-tetrahydrofolate binding site; it reads SLLP.

It belongs to the Fmt family.

It carries out the reaction L-methionyl-tRNA(fMet) + (6R)-10-formyltetrahydrofolate = N-formyl-L-methionyl-tRNA(fMet) + (6S)-5,6,7,8-tetrahydrofolate + H(+). Functionally, attaches a formyl group to the free amino group of methionyl-tRNA(fMet). The formyl group appears to play a dual role in the initiator identity of N-formylmethionyl-tRNA by promoting its recognition by IF2 and preventing the misappropriation of this tRNA by the elongation apparatus. In Anaplasma phagocytophilum (strain HZ), this protein is Methionyl-tRNA formyltransferase.